A 148-amino-acid polypeptide reads, in one-letter code: 3-dehydroquinate dehydratase (148 aa).

Residues Asn74, His80, and Asp87 each contribute to the substrate site. Residue His100 is the Proton donor of the active site. Substrate is bound by residues 101 to 102 and Arg111; that span reads LS.

Belongs to the type-II 3-dehydroquinase family. As to quaternary structure, homododecamer.

The enzyme catalyses 3-dehydroquinate = 3-dehydroshikimate + H2O. It functions in the pathway metabolic intermediate biosynthesis; chorismate biosynthesis; chorismate from D-erythrose 4-phosphate and phosphoenolpyruvate: step 3/7. In Bacillus subtilis (strain 168), this protein is 3-dehydroquinate dehydratase (yqhS).